The sequence spans 496 residues: GTPase Der (496 aa).

EngA-type G domains follow at residues 3-166 (PVIA…VGKF) and 209-382 (VKLA…TCAT). Residues 9-16 (GRPNVGKS), 56-60 (DTGGI), 118-121 (NKTD), 215-222 (GRPNVGKS), 262-266 (DTAGV), and 327-330 (NKWD) each bind GTP. Positions 383–467 (RRVGTSMLTR…PIRIQFKEGE (85 aa)) constitute a KH-like domain.

It belongs to the TRAFAC class TrmE-Era-EngA-EngB-Septin-like GTPase superfamily. EngA (Der) GTPase family. Associates with the 50S ribosomal subunit.

Its function is as follows. GTPase that plays an essential role in the late steps of ribosome biogenesis. The polypeptide is GTPase Der (Proteus mirabilis (strain HI4320)).